The sequence spans 223 residues: Phosphoglycolate phosphatase (223 aa).

The active-site Nucleophile is Asp-10. Residues Asp-10 and Asp-12 each contribute to the Mg(2+) site. Lys-149 is a binding site for substrate. Residues Asp-172 and Asp-176 each coordinate Mg(2+).

Belongs to the archaeal SPP-like hydrolase family. The cofactor is Mg(2+).

It carries out the reaction 2-phosphoglycolate + H2O = glycolate + phosphate. Functionally, catalyzes the dephosphorylation of 2-phosphoglycolate. This is Phosphoglycolate phosphatase from Archaeoglobus fulgidus (strain ATCC 49558 / DSM 4304 / JCM 9628 / NBRC 100126 / VC-16).